The sequence spans 391 residues: ATP phosphoribosyltransferase regulatory subunit (391 aa).

This sequence belongs to the class-II aminoacyl-tRNA synthetase family. HisZ subfamily. As to quaternary structure, heteromultimer composed of HisG and HisZ subunits.

It localises to the cytoplasm. It participates in amino-acid biosynthesis; L-histidine biosynthesis; L-histidine from 5-phospho-alpha-D-ribose 1-diphosphate: step 1/9. In terms of biological role, required for the first step of histidine biosynthesis. May allow the feedback regulation of ATP phosphoribosyltransferase activity by histidine. The sequence is that of ATP phosphoribosyltransferase regulatory subunit from Nitrosomonas europaea (strain ATCC 19718 / CIP 103999 / KCTC 2705 / NBRC 14298).